The sequence spans 155 residues: cAMP-dependent protein kinase type II-alpha regulatory subunit (155 aa).

Positions 1-34 are disordered; it reads SGSQDLEPSSGLVTDAIADSESEDDEDLDVPIPS. The interval 1–81 is dimerization and phosphorylation; it reads SGSQDLEPSS…LQEACKDILL (81 aa). A compositionally biased stretch (acidic residues) spans 18 to 29; it reads ADSESEDDEDLD. Phosphoserine occurs at positions 20 and 22. The residue at position 41 (Ser41) is a Phosphoserine; by PKA. 3',5'-cyclic AMP-binding positions include 82–155 and Glu150; that span reads FKNL…ALMY.

This sequence belongs to the cAMP-dependent kinase regulatory chain family. As to quaternary structure, the inactive form of the enzyme is composed of two regulatory chains and two catalytic chains. Activation by cAMP produces two active catalytic monomers and a regulatory dimer that binds four cAMP molecules. Interacts with AKAP4 and CBFA2T3. Interacts with the phosphorylated form of PJA2. Interacts with MYRIP; this interaction may link PKA to components of the exocytosis machinery, thus facilitating exocytosis, including insulin release. Forms a complex composed of PRKAR2A, GSK3B and GSKIP through GSKIP interaction; facilitates PKA-induced phosphorylation and regulates GSK3B activity. Interacts with ADCY8; inhibits adenylate cyclase activity through PKA phosphorylation. In terms of processing, phosphorylated by the activated catalytic chain. Four types of regulatory chains are found: I-alpha, I-beta, II-alpha, and II-beta. Their expression varies among tissues and is in some cases constitutive and in others inducible.

The protein localises to the cytoplasm. The protein resides in the cell membrane. Its function is as follows. Regulatory subunit of the cAMP-dependent protein kinases involved in cAMP signaling in cells. Type II regulatory chains mediate membrane association by binding to anchoring proteins, including the MAP2 kinase. The protein is cAMP-dependent protein kinase type II-alpha regulatory subunit (PRKAR2A) of Sus scrofa (Pig).